A 455-amino-acid chain; its full sequence is tRNA modification GTPase MnmE (455 aa).

(6S)-5-formyl-5,6,7,8-tetrahydrofolate is bound by residues Arg-26, Glu-86, and Arg-125. One can recognise a TrmE-type G domain in the interval 222–376 (GLKTAIIGRP…VEEKINQIFF (155 aa)). Asn-232 contributes to the K(+) binding site. Residues 232–237 (NVGKSS), 251–257 (TDIAGTT), and 276–279 (DTAG) each bind GTP. Residue Ser-236 participates in Mg(2+) binding. Residues Thr-251, Ile-253, and Thr-256 each coordinate K(+). Thr-257 provides a ligand contact to Mg(2+). Residue Lys-455 participates in (6S)-5-formyl-5,6,7,8-tetrahydrofolate binding.

It belongs to the TRAFAC class TrmE-Era-EngA-EngB-Septin-like GTPase superfamily. TrmE GTPase family. Homodimer. Heterotetramer of two MnmE and two MnmG subunits. K(+) serves as cofactor.

It localises to the cytoplasm. Its function is as follows. Exhibits a very high intrinsic GTPase hydrolysis rate. Involved in the addition of a carboxymethylaminomethyl (cmnm) group at the wobble position (U34) of certain tRNAs, forming tRNA-cmnm(5)s(2)U34. The chain is tRNA modification GTPase MnmE from Lactococcus lactis subsp. lactis (strain IL1403) (Streptococcus lactis).